Here is a 218-residue protein sequence, read N- to C-terminus: Adenylate kinase (218 aa).

Residue 10 to 15 coordinates ATP; sequence GAGKGT. The segment at 30 to 59 is NMP; the sequence is STGDMLRAAVKAATPLGLAAKKIMDEGGLV. Residues threonine 31, arginine 36, 57–59, 85–88, and glutamine 92 each bind AMP; these read GLV and GFPR. The LID stretch occupies residues 122–159; the sequence is GRRVHLASGRTYHVTFNPPAVPDKDDLTGEPLVQRNDD. Residues arginine 123 and 132–133 contribute to the ATP site; that span reads TY. Residues arginine 156 and arginine 167 each contribute to the AMP site. Glycine 203 serves as a coordination point for ATP.

Belongs to the adenylate kinase family. As to quaternary structure, monomer.

It is found in the cytoplasm. It carries out the reaction AMP + ATP = 2 ADP. It participates in purine metabolism; AMP biosynthesis via salvage pathway; AMP from ADP: step 1/1. Functionally, catalyzes the reversible transfer of the terminal phosphate group between ATP and AMP. Plays an important role in cellular energy homeostasis and in adenine nucleotide metabolism. The polypeptide is Adenylate kinase (Chlorobaculum tepidum (strain ATCC 49652 / DSM 12025 / NBRC 103806 / TLS) (Chlorobium tepidum)).